The primary structure comprises 368 residues: Flavanone 3-dioxygenase (368 aa).

A Fe2OG dioxygenase domain is found at 191-295 (CVDMDQKVIV…RMSIATFQNP (105 aa)). Fe cation-binding residues include histidine 218, aspartate 220, and histidine 276. Position 286 (arginine 286) interacts with 2-oxoglutarate.

It belongs to the iron/ascorbate-dependent oxidoreductase family. Requires Fe(2+) as cofactor. The cofactor is L-ascorbate.

The enzyme catalyses a (2S)-flavan-4-one + 2-oxoglutarate + O2 = a (2R,3R)-dihydroflavonol + succinate + CO2. Its pathway is secondary metabolite biosynthesis; flavonoid biosynthesis. Involved in the conversion of (2S)-naringenin to (+)-(2R/3R)-dihydrokaempferol. The chain is Flavanone 3-dioxygenase (FHT) from Petroselinum crispum (Parsley).